Consider the following 594-residue polypeptide: NADH-ubiquinone oxidoreductase chain 5 (594 aa).

The next 15 membrane-spanning stretches (helical) occupy residues 1–21 (MNLFSSTTLTMLFVLTLPIMM), 43–63 (AFLISLVPMIAFTNTGQEMII), 87–107 (IVFAPVALFVTWSIMEFSMWY), 114–134 (INQFFKYLLLFLITMMILVTA), 137–157 (LFQLFIGWEGVGIMSFLLIGW), 171–191 (AILYNRIGDVGFIMAMAWFLS), 211–233 (LPLMGLILAATGKSAQFGLHPWL), 241–261 (TPVSALLHSSTMVVAGVFLLI), 272–292 (LMQTITMCLGAITTLFTAMCA), 301–320 (IIAFSTSSQLGLMMVTIGIN), 325–347 (AFLHICTHAFFKAMLFMCSGSII), 366–386 (MPFTTTTLIVGSMALTGVPFL), 409–429 (LLITLVATSLTAVYSTRIIFF), 457–477 (LMAGSIFAGFILSHNLPPMTT), and 486–506 (LKMTALAVTMLGFTLAFEITL).

It belongs to the complex I subunit 5 family. Core subunit of respiratory chain NADH dehydrogenase (Complex I) which is composed of 45 different subunits.

The protein localises to the mitochondrion inner membrane. The catalysed reaction is a ubiquinone + NADH + 5 H(+)(in) = a ubiquinol + NAD(+) + 4 H(+)(out). Core subunit of the mitochondrial membrane respiratory chain NADH dehydrogenase (Complex I) which catalyzes electron transfer from NADH through the respiratory chain, using ubiquinone as an electron acceptor. Essential for the catalytic activity and assembly of complex I. The sequence is that of NADH-ubiquinone oxidoreductase chain 5 (MT-ND5) from Hippopotamus amphibius (Hippopotamus).